A 124-amino-acid polypeptide reads, in one-letter code: MQTVIFIGIFGALGCLCRYYLSGWVYDIVGRAFPYGTFAVNIIGAFLIGLIMEFSLRSTLVSPQLRVGLTIGFLGGLTTFSTFSYETFRLLEDGELLIASVNVLTSVLVCLVFTWLGIAAARYI.

Helical transmembrane passes span 4–24 (VIFIGIFGALGCLCRYYLSGW), 32–52 (AFPYGTFAVNIIGAFLIGLIM), 68–88 (GLTIGFLGGLTTFSTFSYETF), and 96–116 (LLIASVNVLTSVLVCLVFTWL). Residues Gly-75 and Thr-78 each coordinate Na(+).

The protein belongs to the fluoride channel Fluc/FEX (TC 1.A.43) family.

The protein resides in the cell inner membrane. It catalyses the reaction fluoride(in) = fluoride(out). Its activity is regulated as follows. Na(+) is not transported, but it plays an essential structural role and its presence is essential for fluoride channel function. Functionally, fluoride-specific ion channel. Important for reducing fluoride concentration in the cell, thus reducing its toxicity. This chain is Fluoride-specific ion channel FluC, found in Geotalea daltonii (strain DSM 22248 / JCM 15807 / FRC-32) (Geobacter daltonii).